The sequence spans 100 residues: Urease subunit gamma (100 aa).

This sequence belongs to the urease gamma subunit family. Heterotrimer of UreA (gamma), UreB (beta) and UreC (alpha) subunits. Three heterotrimers associate to form the active enzyme. Post-translationally, although not discussed in the published references, Met-1 is represented in the submitted PDB entries as being modified by either a formyl, a carboxyl, or an acetyl group. The N-terminal is probably N-(dihydroxymethyl)methionine, the hydrated form of N-formylmethionine.

The protein localises to the cytoplasm. It catalyses the reaction urea + 2 H2O + H(+) = hydrogencarbonate + 2 NH4(+). Its pathway is nitrogen metabolism; urea degradation; CO(2) and NH(3) from urea (urease route): step 1/1. The chain is Urease subunit gamma from Sporosarcina pasteurii (Bacillus pasteurii).